Reading from the N-terminus, the 332-residue chain is DNA-directed RNA polymerase subunit alpha (332 aa).

The tract at residues Met1–Asn226 is alpha N-terminal domain (alpha-NTD). The tract at residues Leu243–Ile332 is alpha C-terminal domain (alpha-CTD).

Belongs to the RNA polymerase alpha chain family. As to quaternary structure, homodimer. The RNAP catalytic core consists of 2 alpha, 1 beta, 1 beta' and 1 omega subunit. When a sigma factor is associated with the core the holoenzyme is formed, which can initiate transcription.

The enzyme catalyses RNA(n) + a ribonucleoside 5'-triphosphate = RNA(n+1) + diphosphate. Functionally, DNA-dependent RNA polymerase catalyzes the transcription of DNA into RNA using the four ribonucleoside triphosphates as substrates. This chain is DNA-directed RNA polymerase subunit alpha, found in Leifsonia xyli subsp. xyli (strain CTCB07).